A 551-amino-acid polypeptide reads, in one-letter code: Probable inorganic carbon transporter subunit DabB2 (551 aa).

14 consecutive transmembrane segments (helical) span residues 6-26 (SHTT…AAVI), 42-62 (VQWT…SFLF), 65-85 (QQNL…LALS), 86-106 (IQVN…LSVI), 132-152 (GFFL…AIIA), 187-207 (LLLA…FSQI), 217-237 (LSIA…LKSA), 252-272 (PTPV…IIVL), 284-304 (ALLL…LVML), 321-341 (LGFM…LHLV), 374-394 (VVAW…IAAA), 404-424 (MLPA…LKAL), 434-454 (VAAG…EVFI), and 469-489 (PLLD…VAWL).

The protein belongs to the inorganic carbon transporter (TC 9.A.2) DabB family. In terms of assembly, forms a complex with DabA2, possibly a heterodimer.

It is found in the cell inner membrane. With respect to regulation, uptake of inorganic carbon by cells in the presence of thiosulphate is fully inhibited by the uncouplers carbonyl cyanide m-chlorophenyl hydrazone (CCCP), carbonyl cyanide p-trifluoromethoxyphenyl hydrazone (FCCP), S13 or SF6847. Not inhibited by the ATPase inhibitor N,N-dicyclohexylcarbodiimide (DCCD). Inorganic carbon uptake is inhibited by the ionophore carbonyl cyanide m-chlorophenyl hydrazone (CCCP), suggesting uptake is coupled to a cation gradient. Functionally, part of an energy-coupled inorganic carbon pump; its substrate may be carbon dioxide. Expression of both dabA2 and dabB2 (DAB2) restores growth in ambient air to E.coli deleted of its carbonic anhydrase genes (called CAfree, deletion of 'can' and 'cynT'); neither dabA2 or dabB2 alone is sufficient. Rescue is pH-independent, suggesting it transports CO(2) and not carbonate ions. Together the genes allow greater than normal uptake of inorganic carbon by E.coli. Uptake of carbon dioxide rather than bicarbonate has been suggested based on kinetic calculations. The sequence is that of Probable inorganic carbon transporter subunit DabB2 from Halothiobacillus neapolitanus (strain ATCC 23641 / c2) (Thiobacillus neapolitanus).